The following is a 490-amino-acid chain: Aspartyl/glutamyl-tRNA(Asn/Gln) amidotransferase subunit B (490 aa).

The protein belongs to the GatB/GatE family. GatB subfamily. Heterotrimer of A, B and C subunits.

The enzyme catalyses L-glutamyl-tRNA(Gln) + L-glutamine + ATP + H2O = L-glutaminyl-tRNA(Gln) + L-glutamate + ADP + phosphate + H(+). It carries out the reaction L-aspartyl-tRNA(Asn) + L-glutamine + ATP + H2O = L-asparaginyl-tRNA(Asn) + L-glutamate + ADP + phosphate + 2 H(+). Functionally, allows the formation of correctly charged Asn-tRNA(Asn) or Gln-tRNA(Gln) through the transamidation of misacylated Asp-tRNA(Asn) or Glu-tRNA(Gln) in organisms which lack either or both of asparaginyl-tRNA or glutaminyl-tRNA synthetases. The reaction takes place in the presence of glutamine and ATP through an activated phospho-Asp-tRNA(Asn) or phospho-Glu-tRNA(Gln). This chain is Aspartyl/glutamyl-tRNA(Asn/Gln) amidotransferase subunit B, found in Zymomonas mobilis subsp. mobilis (strain ATCC 31821 / ZM4 / CP4).